The primary structure comprises 180 residues: MSKKKAEDKQPIIKDEAVEEPKSDSKVNALSAKIAELQQQLDDSQNDYLRAQAEIQNMQKRSQKEQSALAKYGAQRLAKEVVPVMDDLKRALQVQVDNDSGQQLKTGIEMVYKHLEKALNDNDIKEIDADGVAFDPELHQAVQTVPADDDHPADTVVQVLQSGYKLADRVLRPAMVVVAQ.

Residues 1–25 (MSKKKAEDKQPIIKDEAVEEPKSDS) form a disordered region.

Belongs to the GrpE family. As to quaternary structure, homodimer.

It is found in the cytoplasm. In terms of biological role, participates actively in the response to hyperosmotic and heat shock by preventing the aggregation of stress-denatured proteins, in association with DnaK and GrpE. It is the nucleotide exchange factor for DnaK and may function as a thermosensor. Unfolded proteins bind initially to DnaJ; upon interaction with the DnaJ-bound protein, DnaK hydrolyzes its bound ATP, resulting in the formation of a stable complex. GrpE releases ADP from DnaK; ATP binding to DnaK triggers the release of the substrate protein, thus completing the reaction cycle. Several rounds of ATP-dependent interactions between DnaJ, DnaK and GrpE are required for fully efficient folding. The protein is Protein GrpE of Fructilactobacillus sanfranciscensis (Lactobacillus sanfranciscensis).